The following is a 362-amino-acid chain: Spermidine/putrescine import ATP-binding protein PotA (362 aa).

Positions 6-236 constitute an ABC transporter domain; that stretch reads VELKHVGKRY…PVNHFVADFI (231 aa). Residue 38 to 45 coordinates ATP; the sequence is GPSGSGKT.

It belongs to the ABC transporter superfamily. Spermidine/putrescine importer (TC 3.A.1.11.1) family. As to quaternary structure, the complex is composed of two ATP-binding proteins (PotA), two transmembrane proteins (PotB and PotC) and a solute-binding protein (PotD).

Its subcellular location is the cell membrane. It carries out the reaction ATP + H2O + polyamine-[polyamine-binding protein]Side 1 = ADP + phosphate + polyamineSide 2 + [polyamine-binding protein]Side 1.. Its function is as follows. Part of the ABC transporter complex PotABCD involved in spermidine/putrescine import. Responsible for energy coupling to the transport system. The polypeptide is Spermidine/putrescine import ATP-binding protein PotA (Lacticaseibacillus paracasei (strain ATCC 334 / BCRC 17002 / CCUG 31169 / CIP 107868 / KCTC 3260 / NRRL B-441) (Lactobacillus paracasei)).